Consider the following 119-residue polypeptide: Phosphoribosyl-AMP cyclohydrolase (119 aa).

Mg(2+) is bound at residue Asp77. Cys78 contributes to the Zn(2+) binding site. Residues Asp79 and Asp81 each contribute to the Mg(2+) site. Residues Cys94 and Cys101 each contribute to the Zn(2+) site.

It belongs to the PRA-CH family. In terms of assembly, homodimer. Mg(2+) is required as a cofactor. Zn(2+) serves as cofactor.

It localises to the cytoplasm. It carries out the reaction 1-(5-phospho-beta-D-ribosyl)-5'-AMP + H2O = 1-(5-phospho-beta-D-ribosyl)-5-[(5-phospho-beta-D-ribosylamino)methylideneamino]imidazole-4-carboxamide. It functions in the pathway amino-acid biosynthesis; L-histidine biosynthesis; L-histidine from 5-phospho-alpha-D-ribose 1-diphosphate: step 3/9. Functionally, catalyzes the hydrolysis of the adenine ring of phosphoribosyl-AMP. The protein is Phosphoribosyl-AMP cyclohydrolase of Cereibacter sphaeroides (strain KD131 / KCTC 12085) (Rhodobacter sphaeroides).